A 223-amino-acid chain; its full sequence is MDLASLRAQQIELASSVICEDRLDKDPPDLIAGADVGFEQGGEVTRAAMVLLKYPSLELVEYKVARIATTMPYIPGFLSFREYPALLAAWEMLSQKPDLVFVDGHGISHPRRLGVASHFGLLVDVPTIGVAKKRLCGKFEPLSSKPGALAPLMDKGEQLAWVWRSKARCNPLFIATGHRVSVDSALAWVQRCMKGYRLPEPTRWADAVASERPAFVRYTANQP.

Positions 35 and 103 each coordinate Mg(2+).

It belongs to the endonuclease V family. It depends on Mg(2+) as a cofactor.

It localises to the cytoplasm. The enzyme catalyses Endonucleolytic cleavage at apurinic or apyrimidinic sites to products with a 5'-phosphate.. Its function is as follows. DNA repair enzyme involved in the repair of deaminated bases. Selectively cleaves double-stranded DNA at the second phosphodiester bond 3' to a deoxyinosine leaving behind the intact lesion on the nicked DNA. This chain is Endonuclease V, found in Shigella flexneri serotype 5b (strain 8401).